The chain runs to 192 residues: Riboflavin kinase (192 aa).

Mg(2+) contacts are provided by Thr-47 and Asn-49. Glu-129 (nucleophile) is an active-site residue.

It belongs to the flavokinase family. Zn(2+) serves as cofactor. The cofactor is Mg(2+).

The enzyme catalyses riboflavin + ATP = FMN + ADP + H(+). It participates in cofactor biosynthesis; FMN biosynthesis; FMN from riboflavin (ATP route): step 1/1. Its function is as follows. Catalyzes the phosphorylation of riboflavin (vitamin B2) to form flavin mononucleotide (FMN) coenzyme. In Yarrowia lipolytica (strain CLIB 122 / E 150) (Yeast), this protein is Riboflavin kinase (FMN1).